The following is a 345-amino-acid chain: uncharacterized protein (345 aa).

Disordered stretches follow at residues 1–58 (MPSP…WRGD) and 139–165 (KTNS…NSPK). Positions 27–39 (IKGEGSDDGKEKS) are enriched in basic and acidic residues. Residues 154-165 (KQGSAESKNSPK) are compositionally biased toward polar residues.

The protein belongs to the MG307/MG309/MG338 family.

This is an uncharacterized protein from Mycoplasma pneumoniae (strain ATCC 29342 / M129 / Subtype 1) (Mycoplasmoides pneumoniae).